The primary structure comprises 717 residues: Probable inactive histone-lysine N-methyltransferase SUVR2 (717 aa).

Residues 61–73 are compositionally biased toward basic and acidic residues; that stretch reads QAIQESEEKKADE. A disordered region spans residues 61-136; the sequence is QAIQESEEKK…LGSPTLEGPS (76 aa). Residues 120 to 130 are compositionally biased toward low complexity; sequence SALASPSLGSP. Residues Cys-445, Cys-446, Cys-449, Cys-453, Cys-462, Cys-529, Cys-533, Cys-535, and Cys-539 each coordinate Zn(2+). One can recognise a Pre-SET domain in the interval 458–547; the sequence is MACRCATAFN…NCGNRVVQQG (90 aa). An SET domain is found at 550 to 679; the sequence is NKLQVFFTPN…AMEELTWDYG (130 aa). Residues 561-563 and 635-636 contribute to the S-adenosyl-L-methionine site; these read RGW and NH. Residue Cys-638 participates in Zn(2+) binding. Tyr-678 contacts S-adenosyl-L-methionine. A Post-SET domain is found at 690–706; that stretch reads SPFHCQCGSDFCRVRKQ. The Zn(2+) site is built by Cys-694, Cys-696, and Cys-701.

Belongs to the class V-like SAM-binding methyltransferase superfamily. Histone-lysine methyltransferase family. Interacts with SUVR1, CHR19, CHR28 and itself. Interacts with CHR27.

It is found in the nucleus. The protein resides in the chromosome. Probable inactive histone-lysine methyltransferase that acts as regulator of transctiptional gene silencing independently of histone H3K9 methylation. Contributes to transcriptional gene silencing at RNA-directed DNA methylation (RdDM) target loci but also at RdDM-independent target loci. Forms a complex with SUVR1 and associates with the SNF2-related chromatin-remodeling proteins CHR19, CHR27, and CHR28, thereby mediating nucleosome positioning and transcriptional silencing. Does not possess histone-lysine methyltransferase activity in vitro, and the conserved catalytic sites of SUVR2 are dispensable for its function in transcriptional gene silencing. The protein is Probable inactive histone-lysine N-methyltransferase SUVR2 (SUVR2) of Arabidopsis thaliana (Mouse-ear cress).